The primary structure comprises 259 residues: MVAMDPTGPSESIYNLIPSDWKEPPQPPRYVSIFKATVKDDMQKFKTAMKTMGPAKLEVPSPKDFLKKHSKEKILPPKKKFEWNERRKPPVPLRTDHPVMGIQSEKNFINTNAADVIMGVAKKPKPIYVDKRTGDKHDLETSGLVPKYINKKDYGVTPEYICKRNEEVKKAQEEYDNYIQENLRKAAMKRLSDEEREAVLQGLKKNWEEVHKEFQSLSVFIDSIPKKIRKQKLEEEMKQLEHDIGVLEKHKVIYIANKK.

2 disordered regions span residues 1 to 26 and 76 to 98; these read MVAM…EPPQ and PPKK…TDHP. The segment covering 76 to 88 has biased composition (basic and acidic residues); sequence PPKKKFEWNERRK. The short motif at 86-92 is the SH3-binding element; the sequence is RRKPPVP. Positions 163 to 255 constitute an Enkurin domain; sequence KRNEEVKKAQ…VLEKHKVIYI (93 aa). The interval 163–258 is interaction with TRPC proteins; sequence KRNEEVKKAQ…KHKVIYIANK (96 aa). The IQ domain maps to 179–190; that stretch reads IQENLRKAAMKR.

In terms of assembly, microtubule inner protein component of sperm flagellar doublet microtubules. Binds calmodulin via its IQ domain. Interacts with TRPC1, TRPC2, TRPC5, but not TRPC3. Interacts with CFAP45. In terms of tissue distribution, expressed in trachea multiciliated cells.

It localises to the cytoplasm. The protein localises to the cytoskeleton. The protein resides in the flagellum axoneme. It is found in the cilium axoneme. Functionally, adapter that functions to localize a calcium-sensitive signal transduction machinery in sperm to a calcium-permeable ion channel. Microtubule inner protein (MIP) part of the dynein-decorated doublet microtubules (DMTs) in cilia axoneme, which is required for motile cilia beating. This is Enkurin (ENKUR) from Bos taurus (Bovine).